We begin with the raw amino-acid sequence, 209 residues long: Claudin-like protein ZF-A9 (209 aa).

The next 4 membrane-spanning stretches (helical) occupy residues 8–28 (LGTT…AIPL), 81–101 (AILV…FAGG), 114–134 (ALVA…GLVP), and 159–179 (FGAA…GGGL). The interval 187–209 (GRTSSRGRYTPASQNGRERSEYV) is disordered. Positions 188 to 201 (RTSSRGRYTPASQN) are enriched in polar residues.

It belongs to the claudin family.

It localises to the cell membrane. The protein localises to the cell junction. It is found in the tight junction. In terms of biological role, component of tight junction (TJ) strands. The sequence is that of Claudin-like protein ZF-A9 (cldng) from Danio rerio (Zebrafish).